We begin with the raw amino-acid sequence, 374 residues long: Alcohol dehydrogenase 1 (374 aa).

N-acetylserine is present on Ser1. Zn(2+)-binding residues include Cys46, His67, Cys97, Cys100, Cys103, Cys111, and Cys174. NAD(+) contacts are provided by residues 199–204 (GLGGVG), Asp223, Lys228, 292–294 (VGV), and Arg369.

Belongs to the zinc-containing alcohol dehydrogenase family. Class-I subfamily. As to quaternary structure, homodimer. The cofactor is Zn(2+).

It is found in the cytoplasm. The catalysed reaction is a primary alcohol + NAD(+) = an aldehyde + NADH + H(+). The enzyme catalyses a secondary alcohol + NAD(+) = a ketone + NADH + H(+). This chain is Alcohol dehydrogenase 1 (ADH1), found in Struthio camelus (Common ostrich).